The sequence spans 247 residues: MSGHNKWSTIKHKKGAADAKRGKIFTKLIKEITVAAKLGGGDPEGNPRLRTAIDKAKGENMPKDNIERAIKKGTGGMDGVVYEETTYEGYGPGGAAVLVEVMTDNRNRTVSDVRSIFTKCNGNMGESGCVSWMFDKKGLMVFPKSVDFDKLFEAAIEAGAEDVSDEEEQIEVTTDPVSFMEVRDTLEKAGFKPESAEVTMIPQTMVKLEGKQAENMLKLMDRMEDNDDVQNVYANFDISEEEMDKMM.

This sequence belongs to the TACO1 family.

It is found in the cytoplasm. The sequence is that of Probable transcriptional regulatory protein Gura_1416 from Geotalea uraniireducens (strain Rf4) (Geobacter uraniireducens).